We begin with the raw amino-acid sequence, 574 residues long: Splicing factor U2af large subunit A (574 aa).

Residues 1–180 are disordered; sequence MAEHEEQPYE…SKRVSGFDQG (180 aa). Low complexity predominate over residues 18–41; it reads PAPASAYAEYPAPEGSPPAAAAKP. Residues 53-143 are compositionally biased toward basic and acidic residues; it reads RSQHETQPHD…ERRRDRDRDG (91 aa). Residues 144–172 are compositionally biased toward basic residues; that stretch reads HRRHRSRSRSPSKGRDRRSRSRSRSRSSK. 3 RRM domains span residues 238 to 321, 358 to 436, and 479 to 565; these read RRVY…RPTD, DRIF…RANQ, and QVVS…YPED.

It belongs to the splicing factor SR family.

It is found in the nucleus. In terms of biological role, necessary for the splicing of pre-mRNA. In Oryza sativa subsp. japonica (Rice), this protein is Splicing factor U2af large subunit A (U2AF65A).